The following is a 300-amino-acid chain: UDP-N-acetylenolpyruvoylglucosamine reductase (300 aa).

In terms of domain architecture, FAD-binding PCMH-type spans 28 to 190 (KIGGRVKYLV…TRAMMSFKKE (163 aa)). R169 is an active-site residue. S219 serves as the catalytic Proton donor. The active site involves E290.

It belongs to the MurB family. The cofactor is FAD.

The protein resides in the cytoplasm. The enzyme catalyses UDP-N-acetyl-alpha-D-muramate + NADP(+) = UDP-N-acetyl-3-O-(1-carboxyvinyl)-alpha-D-glucosamine + NADPH + H(+). It functions in the pathway cell wall biogenesis; peptidoglycan biosynthesis. Functionally, cell wall formation. This chain is UDP-N-acetylenolpyruvoylglucosamine reductase, found in Thermotoga sp. (strain RQ2).